The following is a 57-amino-acid chain: Metallothionein (57 aa).

This sequence belongs to the metallothionein superfamily. Type 14 family.

Its function is as follows. This protein complexes cadmium, zinc and copper. In Thermostichus vulcanus (Synechococcus vulcanus), this protein is Metallothionein (mtnA).